The sequence spans 160 residues: Peptide deformylase 1 (160 aa).

Cysteine 90 and histidine 132 together coordinate Fe cation. The active site involves glutamate 133. Histidine 136 serves as a coordination point for Fe cation.

The protein belongs to the polypeptide deformylase family. Requires Fe(2+) as cofactor.

The catalysed reaction is N-terminal N-formyl-L-methionyl-[peptide] + H2O = N-terminal L-methionyl-[peptide] + formate. Its function is as follows. Removes the formyl group from the N-terminal Met of newly synthesized proteins. Requires at least a dipeptide for an efficient rate of reaction. N-terminal L-methionine is a prerequisite for activity but the enzyme has broad specificity at other positions. The protein is Peptide deformylase 1 (defA) of Bacillus subtilis (strain 168).